The primary structure comprises 915 residues: Protein translocase subunit SecA (915 aa).

ATP-binding positions include Gln-87, 105–109, and Asp-512; that span reads GEGKT. Over residues 849–864 the composition is skewed to low complexity; sequence AAQQQARQAPLPNAPA. Positions 849 to 915 are disordered; the sequence is AAQQQARQAP…CHGSRAKDHA (67 aa). Positions 876–891 are enriched in basic and acidic residues; it reads PEEKVARVAAERHIGR. Zn(2+) is bound by residues Cys-895, Cys-897, Cys-906, and His-907.

The protein belongs to the SecA family. Monomer and homodimer. Part of the essential Sec protein translocation apparatus which comprises SecA, SecYEG and auxiliary proteins SecDF-YajC and YidC. Zn(2+) is required as a cofactor.

Its subcellular location is the cell inner membrane. It is found in the cytoplasm. The catalysed reaction is ATP + H2O + cellular proteinSide 1 = ADP + phosphate + cellular proteinSide 2.. Functionally, part of the Sec protein translocase complex. Interacts with the SecYEG preprotein conducting channel. Has a central role in coupling the hydrolysis of ATP to the transfer of proteins into and across the cell membrane, serving both as a receptor for the preprotein-SecB complex and as an ATP-driven molecular motor driving the stepwise translocation of polypeptide chains across the membrane. In Actinobacillus succinogenes (strain ATCC 55618 / DSM 22257 / CCUG 43843 / 130Z), this protein is Protein translocase subunit SecA.